Reading from the N-terminus, the 264-residue chain is H-2 class II histocompatibility antigen, I-A beta chain (264 aa).

Residues 1–31 (MVWLPRVPCVAAVILLLTVLSPPVALVRDSR) form the signal peptide. The beta-1 stretch occupies residues 32–121 (PWFLEYCKSE…IFDNFLVPRR (90 aa)). At 32-225 (PWFLEYCKSE…KAQSTSAQNK (194 aa)) the chain is on the extracellular side. Disulfide bonds link Cys42–Cys106 and Cys144–Cys200. A glycan (N-linked (GlcNAc...) asparagine) is linked at Asn46. Residues 122 to 215 (VEPTVTVYPT…SLTDPVTVEW (94 aa)) form a beta-2 region. An Ig-like C1-type domain is found at 124-214 (PTVTVYPTKT…PSLTDPVTVE (91 aa)). The connecting peptide stretch occupies residues 216–225 (KAQSTSAQNK). Residues 226–248 (MLSGVGGFVLGLLFLRAGLFIYF) traverse the membrane as a helical segment. The Cytoplasmic segment spans residues 249 to 264 (RNQKGQSGLQPTGLLS).

This sequence belongs to the MHC class II family. Post-translationally, ubiquitinated in immature dendritic cells leading to down-regulation of MHC class II.

It is found in the membrane. In Mus musculus (Mouse), this protein is H-2 class II histocompatibility antigen, I-A beta chain (H2-Eb1).